A 100-amino-acid chain; its full sequence is Integration host factor subunit alpha (100 aa).

The protein belongs to the bacterial histone-like protein family. Heterodimer of an alpha and a beta chain.

This protein is one of the two subunits of integration host factor, a specific DNA-binding protein that functions in genetic recombination as well as in transcriptional and translational control. In Erythrobacter litoralis (strain HTCC2594), this protein is Integration host factor subunit alpha.